Consider the following 615-residue polypeptide: DNA mismatch repair protein MutL (615 aa).

The interval 362–397 is disordered; sequence HFAEPAVREPVAPRYSPAPASGSRPAASWPNAQPGY. The segment covering 373–391 has biased composition (low complexity); that stretch reads APRYSPAPASGSRPAASWP.

Belongs to the DNA mismatch repair MutL/HexB family.

Functionally, this protein is involved in the repair of mismatches in DNA. It is required for dam-dependent methyl-directed DNA mismatch repair. May act as a 'molecular matchmaker', a protein that promotes the formation of a stable complex between two or more DNA-binding proteins in an ATP-dependent manner without itself being part of a final effector complex. The chain is DNA mismatch repair protein MutL from Escherichia coli O6:H1 (strain CFT073 / ATCC 700928 / UPEC).